The following is a 632-amino-acid chain: Chaperone protein HtpG (632 aa).

The tract at residues Met1 to Arg343 is a; substrate-binding. Residues Glu344–Lys560 form a b region. A c region spans residues Leu561–Lys632.

The protein belongs to the heat shock protein 90 family. As to quaternary structure, homodimer.

It is found in the cytoplasm. Its function is as follows. Molecular chaperone. Has ATPase activity. This is Chaperone protein HtpG from Aliivibrio salmonicida (strain LFI1238) (Vibrio salmonicida (strain LFI1238)).